The chain runs to 179 residues: Large ribosomal subunit protein uL15 (179 aa).

The protein belongs to the universal ribosomal protein uL15 family. In terms of assembly, part of the 50S ribosomal subunit.

Functionally, binds to the 23S rRNA. The sequence is that of Large ribosomal subunit protein uL15 from Archaeoglobus fulgidus (strain ATCC 49558 / DSM 4304 / JCM 9628 / NBRC 100126 / VC-16).